Consider the following 194-residue polypeptide: GTP cyclohydrolase 1 (194 aa).

Cys-85, His-88, and Cys-156 together coordinate Zn(2+).

This sequence belongs to the GTP cyclohydrolase I family. In terms of assembly, toroid-shaped homodecamer, composed of two pentamers of five dimers.

It catalyses the reaction GTP + H2O = 7,8-dihydroneopterin 3'-triphosphate + formate + H(+). Its pathway is cofactor biosynthesis; 7,8-dihydroneopterin triphosphate biosynthesis; 7,8-dihydroneopterin triphosphate from GTP: step 1/1. The protein is GTP cyclohydrolase 1 of Bacteroides fragilis (strain YCH46).